The chain runs to 720 residues: Polyribonucleotide nucleotidyltransferase (720 aa).

Mg(2+) is bound by residues Asp-487 and Asp-493. Residues 554–613 (PRITTISIPKEKIREVIGTGGKVIREICEQTGAKIDIDDDGTIKVASVDADAAQRAIDWI) enclose the KH domain. Residues 623 to 691 (GVIYNGKVVK…DRGKVKLSMK (69 aa)) form the S1 motif domain. The disordered stretch occupies residues 695-720 (QTTGEDISAQLEAERAASKRERHHED). Over residues 706-720 (EAERAASKRERHHED) the composition is skewed to basic and acidic residues.

The protein belongs to the polyribonucleotide nucleotidyltransferase family. The cofactor is Mg(2+).

Its subcellular location is the cytoplasm. The catalysed reaction is RNA(n+1) + phosphate = RNA(n) + a ribonucleoside 5'-diphosphate. Involved in mRNA degradation. Catalyzes the phosphorolysis of single-stranded polyribonucleotides processively in the 3'- to 5'-direction. This chain is Polyribonucleotide nucleotidyltransferase, found in Paramagnetospirillum magneticum (strain ATCC 700264 / AMB-1) (Magnetospirillum magneticum).